The following is a 605-amino-acid chain: Formin-binding protein 1-like (605 aa).

The 263-residue stretch at 1–263 (MSWGTELWDQ…AAKSVDERRD (263 aa)) folds into the F-BAR domain. Residues 66–258 (FTSCIAFFNI…EGMILAAKSV (193 aa)) adopt a coiled-coil conformation. The interaction with CDC42 stretch occupies residues 245–535 (SKCLEGMILA…EFDDEFEDDD (291 aa)). Ser295 is subject to Phosphoserine. Residues 392–484 (LEDFSHLPPE…VEGKTGIRGD (93 aa)) adopt a coiled-coil conformation. Positions 397 to 474 (HLPPEQRRKK…IHKNEAWLSE (78 aa)) constitute an REM-1 domain. Residues 482 to 538 (RGDRRHSSDINHLVTQGRESPEGSYTDDANQEVRGPPQQHGHHSEFDDEFEDDDPLP) form a disordered region. Phosphoserine is present on residues Ser488, Ser501, and Ser505. Residues 522-605 (GHHSEFDDEF…VTLEKSSKGS (84 aa)) are interaction with DNM1. Residues 527–536 (FDDEFEDDDP) are compositionally biased toward acidic residues. Residues 538–599 (PAIGHCKAIY…PTTYIDVTLE (62 aa)) enclose the SH3 domain. Positions 541-597 (GHCKAIYPFDGHNEGTLAMKEGEVLYIIEEDKGDGWTRARRQNGEEGYVPTTYIDVT) are interaction with DNM2 and WASL. The interval 541–605 (GHCKAIYPFD…VTLEKSSKGS (65 aa)) is interaction with DAAM1, DIAPH1 and DIAPH2.

Belongs to the FNBP1 family. As to quaternary structure, homodimerizes, the dimers can polymerize end-to-end to form filamentous structures. Interacts with GTP-bound CDC42. Interacts with DAAM1, DIAPH1, DIAPH2, DNM1, DNM2 and WASL/N-WASP. Interacts with ATG3. Interacts (via SH3 domain) with ABI1, WASF2, CDC42 and WIPF1.

Its subcellular location is the cytoplasm. The protein resides in the cytoskeleton. The protein localises to the cell cortex. It is found in the cytoplasmic vesicle. It localises to the cell membrane. Its function is as follows. Required to coordinate membrane tubulation with reorganization of the actin cytoskeleton during endocytosis. May bind to lipids such as phosphatidylinositol 4,5-bisphosphate and phosphatidylserine and promote membrane invagination and the formation of tubules. Also promotes CDC42-induced actin polymerization by activating the WASL-WASPIP complex, the predominant form of WASL/N-WASP in cells. Actin polymerization may promote the fission of membrane tubules to form endocytic vesicles. Essential for autophagy of intracellular bacterial pathogens. This chain is Formin-binding protein 1-like (Fnbp1l), found in Mus musculus (Mouse).